The sequence spans 260 residues: Cell division protein FtsQ (260 aa).

Residues 1–26 are Cytoplasmic-facing; that stretch reads MINKVLLEGQRITRSPQVKQHACGAS. Residues 27–47 form a helical membrane-spanning segment; the sequence is FFLVVLLLIGGLLYSTISWMW. The Periplasmic segment spans residues 48–260; that stretch reads DEQRLPLSKL…QELTQEKNDD (213 aa). The POTRA domain maps to 52–122; sequence LPLSKLVLQG…DTIKVYLTEY (71 aa).

The protein belongs to the FtsQ/DivIB family. FtsQ subfamily. Part of a complex composed of FtsB, FtsL and FtsQ.

It is found in the cell inner membrane. Its function is as follows. Essential cell division protein. May link together the upstream cell division proteins, which are predominantly cytoplasmic, with the downstream cell division proteins, which are predominantly periplasmic. May control correct divisome assembly. The chain is Cell division protein FtsQ from Vibrio cholerae serotype O1 (strain ATCC 39315 / El Tor Inaba N16961).